The chain runs to 2122 residues: Pecanex-like protein 2 (2122 aa).

Helical transmembrane passes span 36–53 (LYLW…HLAF) and 60–82 (ALFY…YRLH). 2 disordered regions span residues 92-164 (QHRS…ELPA) and 180-250 (QPEA…LVNP). Composition is skewed to polar residues over residues 146–157 (SRGQSVHSQHSS) and 185–203 (ASST…SQGR). N288 is a glycosylation site (N-linked (GlcNAc...) asparagine). Low complexity-rich tracts occupy residues 392 to 407 (VTSS…AESA) and 458 to 476 (PDRC…PGST). Disordered regions lie at residues 392–556 (VTSS…QIPN) and 575–634 (VVAP…PVFT). Basic and acidic residues predominate over residues 528–538 (STKEVVSDGEK). N-linked (GlcNAc...) asparagine glycosylation occurs at N556. Basic and acidic residues predominate over residues 599–618 (TKEEAVENEKPNGRDPKPGK). Positions 625–634 (DPANGSPVFT) are enriched in polar residues. 13 consecutive transmembrane segments (helical) span residues 825 to 845 (VAVL…NRGF), 849 to 869 (LWVL…LKSV), 882 to 902 (QIIA…ILLL), 933 to 953 (HLIV…FPQI), 976 to 998 (GITS…HAFC), 1010 to 1030 (HIPA…YHLS), 1080 to 1100 (LVIC…TVFL), 1105 to 1125 (FLSI…HHLL), 1174 to 1194 (YLLY…SISN), 1218 to 1238 (SFCN…FFHF), 1245 to 1265 (ESFL…GDLL), 1270 to 1290 (FVLA…HVFA), and 1305 to 1325 (TFAT…VIFI). N1393, N1534, and N1802 each carry an N-linked (GlcNAc...) asparagine glycan. 2 disordered regions span residues 1858-1943 (SVGQ…SSGP) and 1955-1991 (STSV…TTGH). Basic and acidic residues predominate over residues 1888-1898 (ESRDGSTEQPR). Over residues 1922-1942 (SQSVQAHSAISQRPPTLSSSG) the composition is skewed to polar residues. Low complexity predominate over residues 1968 to 1981 (SRLSLHTSAASLHS). A glycan (N-linked (GlcNAc...) asparagine) is linked at N2039. A disordered region spans residues 2097–2122 (VLCRRASQEDMGLDDTASQQSTSDEQ). Positions 2112-2122 (TASQQSTSDEQ) are enriched in polar residues.

Belongs to the pecanex family.

It is found in the membrane. May play a role in tumorigenesis. The protein is Pecanex-like protein 2 of Mus musculus (Mouse).